The sequence spans 664 residues: Kinesin-like protein KIF2B (664 aa).

T125 carries the post-translational modification Phosphothreonine; by PLK1. A coiled-coil region spans residues 149–177; the sequence is CLREIEKLQKQREKRRRLQLEIRARRALD. Residue S204 is modified to Phosphoserine; by PLK1. A Kinesin motor domain is found at 213 to 543; sequence RICVCVRKRP…LRYANRVKEL (331 aa). 303-310 provides a ligand contact to ATP; sequence GQTGSGKT. The interval 583 to 607 is disordered; it reads VQKEEEKESDELTSTKEPAASWSRS. Residues 642–663 are a coiled coil; the sequence is VLTEIQKKLQLLRDDLQKKSQA.

The protein belongs to the TRAFAC class myosin-kinesin ATPase superfamily. Kinesin family. MCAK/KIF2 subfamily. Post-translationally, phosphorylation at Thr-125 by PLK1 is required for activity in the correction of kinetochore-microtubules attachment errors, while phosphorylation at Ser-204 also by PLK1 is required for the kinetochore localization and activity in prometaphase.

The protein resides in the cytoplasm. Its subcellular location is the cytoskeleton. It localises to the microtubule organizing center. The protein localises to the centrosome. It is found in the spindle. The protein resides in the chromosome. Its subcellular location is the centromere. It localises to the kinetochore. In terms of biological role, plus end-directed microtubule-dependent motor required for spindle assembly and chromosome movement. Has microtubule depolymerization activity. Plays a role in chromosome congression. The protein is Kinesin-like protein KIF2B of Rattus norvegicus (Rat).